Consider the following 206-residue polypeptide: Imidazoleglycerol-phosphate dehydratase (206 aa).

It belongs to the imidazoleglycerol-phosphate dehydratase family.

Its subcellular location is the cytoplasm. It catalyses the reaction D-erythro-1-(imidazol-4-yl)glycerol 3-phosphate = 3-(imidazol-4-yl)-2-oxopropyl phosphate + H2O. It participates in amino-acid biosynthesis; L-histidine biosynthesis; L-histidine from 5-phospho-alpha-D-ribose 1-diphosphate: step 6/9. The protein is Imidazoleglycerol-phosphate dehydratase of Leptospira borgpetersenii serovar Hardjo-bovis (strain JB197).